A 1294-amino-acid chain; its full sequence is Disease resistance protein L6 (1294 aa).

Residues 1 to 29 (MSYLREVATAVALLLPFILLNKFWRPNSK) form the signal peptide. The interval 34-54 (NDDDDSTSEVDAISDSTNPSG) is disordered. The TIR domain occupies 59–221 (VEYEVFLSFR…AIADKVSADI (163 aa)). Residues 68-73 (RGPDTR) and Gly101 each bind NAD(+). The active site involves Glu135. Residues 241 to 480 (DDHITAVLEK…VYDRLKISYD (240 aa)) enclose the NB-ARC domain. LRR repeat units follow at residues 246-268 (AVLEKLSLDSENVTMVGLYGMGG), 468-492 (LDEVYDRLKISYDALNPEAKEIFLD), 604-625 (LSELRYLHAREAMLTGDFNNLL), 626-650 (PNLKWLELPFYKHGEDDPPLTNYTM), 904-928 (LENLTSLEVNDIFQTLGGDLDGLQG), 1012-1039 (FPMLKKLDLAVANITKEEDLDAIGSLEE), 1063-1085 (LQKLTTLVVKVPSLREIEGLEEL), 1086-1109 (KSLQDLYLEGCTSLGRLPLEKLKE), 1179-1203 (LEELDSLELTLDDTCSSIERISFLS), 1205-1229 (LQKLTTLIVEVPSLREIEGLAELKS), and 1254-1278 (LKNLNVLDIQGCKSLSVDHLSALKT).

Belongs to the disease resistance TIR-NB-LRR family. In terms of assembly, homooligomer; homooligomerization is required for activity.

It carries out the reaction NAD(+) + H2O = ADP-D-ribose + nicotinamide + H(+). The enzyme catalyses NADP(+) + H2O = ADP-D-ribose 2'-phosphate + nicotinamide + H(+). The catalysed reaction is NAD(+) = 2'cADPR + nicotinamide + H(+). In terms of biological role, TIR-NB-LRR receptor-like protein that confers resistance to the flax rust phytopathogenic fungus (M.lini). An NAD(+) hydrolase (NADase): in response to activation, catalyzes cleavage of NAD(+) into ADP-D-ribose (ADPR) and nicotinamide; NAD(+) cleavage triggering a defense system that promotes cell death. Also able to hydrolyze NADP(+), but not other NAD(+)-related molecules. Makes small amounts of 2' cyclic ADPR (2'cADPR). The protein is Disease resistance protein L6 of Linum usitatissimum (Flax).